Consider the following 429-residue polypeptide: 3-phosphoshikimate 1-carboxyvinyltransferase (429 aa).

The 3-phosphoshikimate site is built by Lys-22, Ser-23, and Arg-27. Residue Lys-22 participates in phosphoenolpyruvate binding. Phosphoenolpyruvate contacts are provided by Gly-94 and Arg-122. Residues Ser-167, Gln-169, Asp-315, and Lys-342 each coordinate 3-phosphoshikimate. Gln-169 lines the phosphoenolpyruvate pocket. Residue Asp-315 is the Proton acceptor of the active site. Residues Arg-346 and Arg-388 each contribute to the phosphoenolpyruvate site.

It belongs to the EPSP synthase family. As to quaternary structure, monomer.

It localises to the cytoplasm. The catalysed reaction is 3-phosphoshikimate + phosphoenolpyruvate = 5-O-(1-carboxyvinyl)-3-phosphoshikimate + phosphate. It functions in the pathway metabolic intermediate biosynthesis; chorismate biosynthesis; chorismate from D-erythrose 4-phosphate and phosphoenolpyruvate: step 6/7. Catalyzes the transfer of the enolpyruvyl moiety of phosphoenolpyruvate (PEP) to the 5-hydroxyl of shikimate-3-phosphate (S3P) to produce enolpyruvyl shikimate-3-phosphate and inorganic phosphate. The chain is 3-phosphoshikimate 1-carboxyvinyltransferase from Geotalea daltonii (strain DSM 22248 / JCM 15807 / FRC-32) (Geobacter daltonii).